Here is a 767-residue protein sequence, read N- to C-terminus: Receptor-type tyrosine-protein phosphatase-like ida-1 (767 aa).

A signal peptide spans 1–19; the sequence is MRFFHSIIVLLFSISTGSA. Residues 20-398 are Lumenal-facing; the sequence is FLLYGCNLSE…SLPVESSERD (379 aa). N-linked (GlcNAc...) asparagine glycans are attached at residues Asn-26 and Asn-146. Residues 399–419 traverse the membrane as a helical segment; that stretch reads WLLMPVLFVCAFTVTALGLVA. Topologically, residues 420–767 are cytoplasmic; the sequence is AVQIARSRRH…NHLLKSIATK (348 aa). The 230-residue stretch at 527–756 folds into the Tyrosine-protein phosphatase domain; it reads SQNRTILPFD…KLVYGCVAQE (230 aa).

The protein belongs to the protein-tyrosine phosphatase family. Receptor class 8 subfamily. Proteolytically cleaved probably at a dibasic consensus sequence by egl-3. As to expression, in hermaphrodites specifically expressed in neurons and in particular in the head nerve ring (ADE, ALA, ASI, ASK, AUA, ASG, AVH and AVJ neurons), in the ventral nerve cord, pre-anal ganglia (PVP neuron), in the tail (PHA, PHB and PHC neurons) and in vulval motor neurons VC and HSN and the vulval uv1 cells. In males, also expressed in neurons anterior to the nerve ring and male-specific neurons in the tail.

The protein localises to the cytoplasmic vesicle membrane. It is found in the perikaryon. It localises to the cell projection. Its subcellular location is the axon. The protein resides in the dendrite. Functionally, regulates dense-core vesicle (DCV) trafficking and/or secretion. Probably by controlling DCV trafficking, plays a role in the AVG neuron-mediated formation of the right axon tract of the ventral nerve cord. Involved in locomotion by regulating acetylcholine release. Probably by controlling the secretion of FLP neuropeptides, regulates the turning step of male mating behavior. Plays a role in preventing dauer formation. This is Receptor-type tyrosine-protein phosphatase-like ida-1 from Caenorhabditis elegans.